Here is a 564-residue protein sequence, read N- to C-terminus: MSKVDVDLGDLLAKVLPTGVKVTIRHISSAPTPCTALFTPPPGEESESTFCENHFLTVSVNADEHDGPEIIVFGIEVLVYSTAHLTTVFVSKADSTGFLHLLKNAPKVSLIRRISNGFLSFLVQTHQRPGVRLVVSLFARAQNQYLFPGSIENSGKHVLDDRGLIKWWCRVVDPILREYEPESGSHEKGLLDRAMESAKSSATAFLIVPGCDKFETRGFFPGTAKSDDKERPRWLNSYPLHQLCDNTDAPPRCLVPRFPDDPKTRFLLDLDDELPQKLEAAGSKEGAGQWRSVKSLDQFWEMMSFRQECSAGRLVGFLWLVINPPGLVNSVQMTSSRPVFKEKAEGSLTTTVPVYDKVDSKPTGTAVSVSTDSQSSDTAKDSTAEATSGGPVQDPSTQTGSLSSETHPKVQPNTDQNAFYWPEAGRGHAVMSEEDYKTAINFLLEQDFYNEKVSIASTKAWSEKVASIVDQLWVGQQVTGRNTSGESADKHAPTTNIINTGLVRKRKKDEPSQATTATSAQKEGCEGNGTVSTAVTAEASTTGTNESPGVNVLQANLIRKKKKA.

Acetyl-CoA contacts are provided by residues Phe138, 157–159 (HVL), and Trp167. Catalysis depends on Asp261, which acts as the Proton donor/acceptor. Lys263 carries the N6-acetyllysine; by autocatalysis modification. Disordered stretches follow at residues 355–420 (YDKV…NAFY) and 506–549 (RKKD…ESPG). A compositionally biased stretch (low complexity) spans 366 to 377 (AVSVSTDSQSSD). Polar residues-rich tracts occupy residues 394–417 (DPST…TDQN) and 512–521 (SQATTATSAQ). The segment covering 529–544 (GTVSTAVTAEASTTGT) has biased composition (low complexity).

It belongs to the RTT109 family.

Its subcellular location is the nucleus. The protein resides in the vacuole. It catalyses the reaction L-lysyl-[protein] + acetyl-CoA = N(6)-acetyl-L-lysyl-[protein] + CoA + H(+). It carries out the reaction L-lysyl-[histone] + acetyl-CoA = N(6)-acetyl-L-lysyl-[histone] + CoA + H(+). Its function is as follows. Histone chaperone-dependent acetylase that modifies 'Lys-56' of histone H3 (H3K56ac). Histone H3 'Lys-56' acetylation may be required for S-phase-linked DNA damage tolerance. Also acetylates 'Lys-9' of histone H3 (H3K9ac). Autoacetylates. This chain is Histone acetyltransferase rtt109, found in Aspergillus flavus.